The following is a 142-amino-acid chain: Large-conductance mechanosensitive channel (142 aa).

Transmembrane regions (helical) follow at residues 14 to 34 (VMDLAVGVIIGAAFSKIVDSV) and 82 to 102 (GNFITVFINFLILAWIIFLLI).

Belongs to the MscL family. As to quaternary structure, homopentamer.

It is found in the cell inner membrane. Functionally, channel that opens in response to stretch forces in the membrane lipid bilayer. May participate in the regulation of osmotic pressure changes within the cell. This is Large-conductance mechanosensitive channel from Sinorhizobium medicae (strain WSM419) (Ensifer medicae).